A 254-amino-acid polypeptide reads, in one-letter code: Ribosomal RNA small subunit methyltransferase J (254 aa).

Residues 107-108 (RD), 123-124 (ER), and D174 each bind S-adenosyl-L-methionine.

It belongs to the methyltransferase superfamily. RsmJ family.

The protein resides in the cytoplasm. It carries out the reaction guanosine(1516) in 16S rRNA + S-adenosyl-L-methionine = N(2)-methylguanosine(1516) in 16S rRNA + S-adenosyl-L-homocysteine + H(+). Its function is as follows. Specifically methylates the guanosine in position 1516 of 16S rRNA. The protein is Ribosomal RNA small subunit methyltransferase J of Coxiella burnetii (strain CbuK_Q154) (Coxiella burnetii (strain Q154)).